We begin with the raw amino-acid sequence, 220 residues long: Adenylate kinase (220 aa).

10 to 15 is a binding site for ATP; that stretch reads GAGKGT. Positions 30–59 are NMP; it reads STGDMLRAAVKAGTPLGVEAKTYMDEGKLV. AMP is bound by residues threonine 31, arginine 36, 57–59, 85–88, and glutamine 92; these read KLV and GFPR. The LID stretch occupies residues 122–159; that stretch reads GRRTHPASGRTYHVKFNPPKVEGKDDVTGEPLVQRDDD. Residues arginine 123 and 132–133 contribute to the ATP site; that span reads TY. AMP is bound by residues arginine 156 and arginine 167. ATP is bound at residue glycine 206.

Belongs to the adenylate kinase family. Monomer.

It localises to the cytoplasm. The catalysed reaction is AMP + ATP = 2 ADP. The protein operates within purine metabolism; AMP biosynthesis via salvage pathway; AMP from ADP: step 1/1. Functionally, catalyzes the reversible transfer of the terminal phosphate group between ATP and AMP. Plays an important role in cellular energy homeostasis and in adenine nucleotide metabolism. The sequence is that of Adenylate kinase from Burkholderia mallei (strain NCTC 10247).